A 331-amino-acid polypeptide reads, in one-letter code: ADP-L-glycero-D-manno-heptose-6-epimerase (331 aa).

Residues 11-12 (FI), 32-33 (DN), Lys-39, Lys-54, 75-79 (EGACS), and Asn-92 contribute to the NADP(+) site. Catalysis depends on Tyr-139, which acts as the Proton acceptor. Residue Lys-143 participates in NADP(+) binding. Residue Asn-168 participates in substrate binding. NADP(+)-binding residues include Val-169 and Lys-177. Residue Lys-177 is the Proton acceptor of the active site. Residues Arg-179, His-186, 200–203 (FGEY), Arg-213, and Tyr-292 contribute to the substrate site.

The protein belongs to the NAD(P)-dependent epimerase/dehydratase family. HldD subfamily. In terms of assembly, homopentamer. It depends on NADP(+) as a cofactor.

It carries out the reaction ADP-D-glycero-beta-D-manno-heptose = ADP-L-glycero-beta-D-manno-heptose. It participates in nucleotide-sugar biosynthesis; ADP-L-glycero-beta-D-manno-heptose biosynthesis; ADP-L-glycero-beta-D-manno-heptose from D-glycero-beta-D-manno-heptose 7-phosphate: step 4/4. Its function is as follows. Catalyzes the interconversion between ADP-D-glycero-beta-D-manno-heptose and ADP-L-glycero-beta-D-manno-heptose via an epimerization at carbon 6 of the heptose. The protein is ADP-L-glycero-D-manno-heptose-6-epimerase of Ralstonia nicotianae (strain ATCC BAA-1114 / GMI1000) (Ralstonia solanacearum).